The following is a 395-amino-acid chain: Xylose isomerase (395 aa).

Catalysis depends on residues histidine 54 and aspartate 57. Mg(2+) is bound by residues glutamate 181, glutamate 217, histidine 220, aspartate 245, aspartate 255, aspartate 257, and aspartate 293.

The protein belongs to the xylose isomerase family. Homotetramer. Requires Mg(2+) as cofactor.

It is found in the cytoplasm. The catalysed reaction is alpha-D-xylose = alpha-D-xylulofuranose. The protein is Xylose isomerase of Pseudarthrobacter chlorophenolicus (strain ATCC 700700 / DSM 12829 / CIP 107037 / JCM 12360 / KCTC 9906 / NCIMB 13794 / A6) (Arthrobacter chlorophenolicus).